The sequence spans 438 residues: Argininosuccinate lyase (438 aa).

This sequence belongs to the lyase 1 family. Argininosuccinate lyase subfamily.

The protein localises to the cytoplasm. The catalysed reaction is 2-(N(omega)-L-arginino)succinate = fumarate + L-arginine. It participates in amino-acid biosynthesis; L-arginine biosynthesis; L-arginine from L-ornithine and carbamoyl phosphate: step 3/3. In Clostridium tetani (strain Massachusetts / E88), this protein is Argininosuccinate lyase.